Reading from the N-terminus, the 851-residue chain is Thrombospondin type-1 domain-containing protein 1 (851 aa).

Residues 1–24 (MKPMLKDFSNLLLVVLCDYVLGEA) form the signal peptide. Topologically, residues 25–412 (EYLLLQEPVH…SPQDPVKSNN (388 aa)) are extracellular. 6 N-linked (GlcNAc...) asparagine glycosylation sites follow: Asn53, Asn58, Asn69, Asn110, Asn135, and Asn304. Residues 339–392 (IETWGPWQPWSPCSTTCGDAVRERRRLCVTSFPSRPSCSGMSSETSPCSLEECA) enclose the TSP type-1 domain. Intrachain disulfides connect Cys351–Cys386, Cys355–Cys391, and Cys366–Cys376. A helical membrane pass occupies residues 413–433 (VVTVTGISLCLFIIFATVLIT). At 434–851 (LWRRFGRAPK…STLSVEKLVI (418 aa)) the chain is on the cytoplasmic side. Ser462 is modified (phosphoserine). Disordered regions lie at residues 471 to 516 (SEPR…ESFQ), 626 to 646 (KSQI…HSRS), and 682 to 777 (SRMR…SSPI). Residues 685–695 (RTWDQMEDRCR) show a composition bias toward basic and acidic residues. A compositionally biased stretch (polar residues) spans 765-776 (SHRSASRKQSSP).

As to quaternary structure, part of a complex composed of THSD1, PTK2/FAK1, TLN1 and VCL. Interacts with TLN1. Expressed in cerebral vascular endothelium.

Its subcellular location is the endosome membrane. The protein resides in the cell junction. The protein localises to the focal adhesion. Functionally, is a positive regulator of nascent focal adhesion assembly, involved in the modulation of endothelial cell attachment to the extracellular matrix. The polypeptide is Thrombospondin type-1 domain-containing protein 1 (Thsd1) (Mus musculus (Mouse)).